Reading from the N-terminus, the 121-residue chain is MISRVTEALSKVKGSMGSHERHALPGVIGDDLLRFGKLPLCLFICIILTAVTVVTTAHHTRLLTAQREQLVLERDALDIEWRNLILEENALGDHSRVERIATEKLQMQHVDPSQENIVVQK.

The Cytoplasmic segment spans residues 1-34 (MISRVTEALSKVKGSMGSHERHALPGVIGDDLLR). A helical membrane pass occupies residues 35–57 (FGKLPLCLFICIILTAVTVVTTA). At 58 to 121 (HHTRLLTAQR…PSQENIVVQK (64 aa)) the chain is on the periplasmic side.

It belongs to the FtsL family. Part of a complex composed of FtsB, FtsL and FtsQ.

It localises to the cell inner membrane. Essential cell division protein. May link together the upstream cell division proteins, which are predominantly cytoplasmic, with the downstream cell division proteins, which are predominantly periplasmic. This chain is Cell division protein FtsL, found in Shigella dysenteriae serotype 1 (strain Sd197).